The sequence spans 86 residues: Progonadoliberin IIB (86 aa).

A signal peptide spans 1 to 24; that stretch reads MVHICRLFVVMGMLMFLSVQFASS. At Q25 the chain carries Pyrrolidone carboxylic acid. Position 34 is a glycine amide (G34).

It belongs to the GnRH family. Olfactory bulbs, hypothalamus and telencephalon, midbrain and posterior brain areas.

The protein localises to the secreted. Its function is as follows. Stimulates the secretion of gonadotropins. This is Progonadoliberin IIB (gnrh2b) from Carassius auratus (Goldfish).